Here is a 466-residue protein sequence, read N- to C-terminus: Adenosylhomocysteinase (466 aa).

Residues T57, D132, and E192 each coordinate substrate. 193-195 contacts NAD(+); that stretch reads TTT. Residues K222 and D226 each contribute to the substrate site. NAD(+) is bound by residues N227, 256 to 261, E279, N314, 335 to 337, and N380; these read GYGDVG and IGH.

The protein belongs to the adenosylhomocysteinase family. NAD(+) serves as cofactor.

The protein resides in the cytoplasm. It catalyses the reaction S-adenosyl-L-homocysteine + H2O = L-homocysteine + adenosine. Its pathway is amino-acid biosynthesis; L-homocysteine biosynthesis; L-homocysteine from S-adenosyl-L-homocysteine: step 1/1. Functionally, may play a key role in the regulation of the intracellular concentration of adenosylhomocysteine. The polypeptide is Adenosylhomocysteinase (Rhizobium rhizogenes (strain K84 / ATCC BAA-868) (Agrobacterium radiobacter)).